We begin with the raw amino-acid sequence, 139 residues long: von Hippel-Lindau-like protein (139 aa).

Residues 1-22 (MPWRAGNGVGLEAQAGTQEAGP) form a disordered region. The interval 54–135 (SRIIICNHSP…GQPVFANITL (82 aa)) is beta-domain.

Belongs to the VHL family. In terms of assembly, interacts via the beta domain with the ODD domain of HIF1A. This interaction is independent of prolyl hydroxylation of HIF1A. In terms of tissue distribution, abundantly expressed in the placenta.

In terms of biological role, functions as a dominant-negative VHL to serve as a protector of HIFalpha. The polypeptide is von Hippel-Lindau-like protein (VHLL) (Homo sapiens (Human)).